The chain runs to 1037 residues: Protein brain tumor (1037 aa).

Disordered regions lie at residues 29–63 (SDSP…SRSE) and 159–178 (SNSS…SPPR). Polar residues-rich tracts occupy residues 31–42 (SPLTLSGSSPPA) and 54–63 (GGSSVKSRSE). Positions 159–175 (SNSSSNSSSSNTSANGS) are enriched in low complexity. A B box-type 1; atypical zinc finger spans residues 174 to 222 (GSPPRCTACKSKCSDAVAKCFECQSYLCANCVTAHEFMHCFNGHNVCLI). Residues C179, C182, C204, H208, C328, H331, C351, and H356 each contribute to the Zn(2+) site. Residues 323 to 366 (QRQLFCPRHKQELLKFSCRTCCILVCKECIVLEHSTGLHELENV) form a B box-type 2 zinc finger. The segment covering 543-554 (GPTGMSLTSNGH) has biased composition (polar residues). The interval 543–606 (GPTGMSLTSN…TAHHQQLQAQ (64 aa)) is disordered. A compositionally biased stretch (low complexity) spans 565 to 577 (QSASNSSASSAGS). The span at 579–598 (HHGHHQQSHHHGHHNHHQTA) shows a compositional bias: basic residues. NHL repeat units lie at residues 767–810 (HCKF…FDKE), 814–859 (KFQF…YNQY), 860–901 (GQFV…FDQN), 902–944 (GNVL…FNYE), and 945–988 (GQYL…FTQD).

Interacts with nanos (nos) and pum. Acts via the formation of a quaternary complex composed of pum, nanos, brat and the 3'-UTR mRNA of hb. Not recruited by nanos and pum to cyclin B 3'-UTR mRNA. Might interact with mira; the interaction seems to be important for brat localization during mitosis. Interacts with Ago1. In terms of tissue distribution, expressed during embryogenesis, mainly in nervous tissues. Expressed in the embryonic central and peripheral nervous systems including the embryonic brain. In third instar larva it is expressed in the larval central nervous system including the brain and the ventral ganglion, in two glands (the ring gland and the salivary gland, and in parts of the foregut) the gastric caeca and the proventriculus.

The protein resides in the cytoplasm. The protein localises to the cell cortex. Functionally, a NHL-domain family protein that functions as a translational repressor to inhibit cell proliferation. Plays a central role in translation repression of hb mRNA by being recruited by nanos (nos) and pum to the Nanos Response Element (NRE), a 16 bp sequence in the hb mRNA 3'-UTR. Probably recruited by other proteins to repress translation of other mRNAs in other tissues. Negatively regulates expression of Myc in a 3'-UTR dependent manner in both neural progenitor and epithelial cells. Regulates expression of mei-P26, possibly at transcriptional level. Involved in the regulation of ribosomal RNA synthesis and cell growth. Participates in abdominal segmentation and imaginal disk development. During neuroblast division, segregates asymmetrically and inhibits self-renewal of one of the two daughter cells. Together with the asymmetrically segregating transcription factor prospero ensures that the daughter cell will stop growing, exit the cell cycle, and differentiate into neurons possibly by modulating the function of dm in ganglion mother cells (GMC). Restricts developmental potential of type II intermediary neuronal progenitor (INP) cells playing a role in proliferation and maturation of the neuroblasts. The protein is Protein brain tumor of Drosophila melanogaster (Fruit fly).